Here is a 320-residue protein sequence, read N- to C-terminus: Ribosomal RNA large subunit methyltransferase F (320 aa).

Residues 1-20 (MHKSANSKTRKQSKGLHPRN) form a disordered region.

Belongs to the methyltransferase superfamily. METTL16/RlmF family.

Its subcellular location is the cytoplasm. It carries out the reaction adenosine(1618) in 23S rRNA + S-adenosyl-L-methionine = N(6)-methyladenosine(1618) in 23S rRNA + S-adenosyl-L-homocysteine + H(+). Its function is as follows. Specifically methylates the adenine in position 1618 of 23S rRNA. The polypeptide is Ribosomal RNA large subunit methyltransferase F (Saccharophagus degradans (strain 2-40 / ATCC 43961 / DSM 17024)).